The chain runs to 372 residues: MIFDEDSNSVTQDSGYMTVGNAYSNAVGYISMSDHWSKLTKPSSIKVESNGASPNKADLIVEPLESGFALTLGNALRRVMMSSLRGFAVYGVEIENVLHEFTSISGVREDVTDILLNISMMRVKLSGLSNKVLSLRVKGPCEVRSGMIPDTDDCIILNKDLLICTLDQDVDFNIKMYVNSGKGYVPAVKRKSVSKLSDVPVNFIATNALYSPIKKASFKVESSRIGQFTDYDRLVLSVETDGSILPDEAVALAARILQDQFQPFINFDETDEPHKKIDTKDALPYDSNLLRKVDELELSVRSYNCLKNDNITYIGDLVQKTESDMLRTPNFGRKSLNEINELLASMNLHLGMKIANWPPESIESLSKQYSEE.

The interval 1–268 is alpha N-terminal domain (alpha-NTD); the sequence is MIFDEDSNSV…DQFQPFINFD (268 aa). The segment at 280-372 is alpha C-terminal domain (alpha-CTD); sequence KDALPYDSNL…ESLSKQYSEE (93 aa).

The protein belongs to the RNA polymerase alpha chain family. Homodimer. The RNAP catalytic core consists of 2 alpha, 1 beta, 1 beta' and 1 omega subunit. When a sigma factor is associated with the core the holoenzyme is formed, which can initiate transcription.

It catalyses the reaction RNA(n) + a ribonucleoside 5'-triphosphate = RNA(n+1) + diphosphate. In terms of biological role, DNA-dependent RNA polymerase catalyzes the transcription of DNA into RNA using the four ribonucleoside triphosphates as substrates. The sequence is that of DNA-directed RNA polymerase subunit alpha from Ehrlichia canis (strain Jake).